We begin with the raw amino-acid sequence, 821 residues long: Probable phosphoenolpyruvate synthase (821 aa).

Residue histidine 444 is the Tele-phosphohistidine intermediate of the active site. Arginine 543, arginine 590, glutamate 687, glycine 709, threonine 710, asparagine 711, and aspartate 712 together coordinate substrate. Position 687 (glutamate 687) interacts with Mg(2+). Aspartate 712 contributes to the Mg(2+) binding site. The Proton donor role is filled by cysteine 759.

It belongs to the PEP-utilizing enzyme family. Mg(2+) serves as cofactor.

It catalyses the reaction pyruvate + ATP + H2O = phosphoenolpyruvate + AMP + phosphate + 2 H(+). It functions in the pathway carbohydrate biosynthesis; gluconeogenesis. Functionally, catalyzes the phosphorylation of pyruvate to phosphoenolpyruvate. The polypeptide is Probable phosphoenolpyruvate synthase (ppsA) (Pyrococcus horikoshii (strain ATCC 700860 / DSM 12428 / JCM 9974 / NBRC 100139 / OT-3)).